Consider the following 1294-residue polypeptide: Leucine-rich repeat receptor protein kinase MSP1 (1294 aa).

Positions 1–22 (MVSNSFWLFILLVSFIPISAWA) are cleaved as a signal peptide. LRR repeat units lie at residues 88–112 (FQSL…LGNL), 113–136 (QNLQ…LYNL), 138–160 (MLKE…IAQL), 161–184 (QHLT…LGSL), and 186–207 (NLEL…TFGN). N-linked (GlcNAc...) asparagine glycosylation is found at N198, N207, and N220. LRR repeat units follow at residues 232 to 256 (LTNL…IGQL), 258 to 280 (NLEL…IGSL), 282 to 304 (QLKL…ISGL), 305 to 328 (SSLT…MGEL), 330 to 352 (NLTQ…LGNC), 353 to 376 (KKLT…FADL), 378 to 400 (AIVS…IQKW), 401 to 422 (KNAR…VLPL), 423 to 446 (QHLL…ICQA), 447 to 469 (NSLH…AFKG), 471 to 493 (TNLT…YLAE), 494 to 517 (LPLV…LWES), 519 to 541 (TLLE…IGKL), 542 to 565 (SVLQ…VGDL), 566 to 589 (RNLT…LFNC), 591 to 613 (KLAT…ISHL), 614 to 637 (TLLD…ICVG), 649 to 673 (LQHH…IKNC), 675 to 697 (MVMV…LGEL), 698 to 721 (TNLT…SGPL), 722 to 745 (VQLQ…IGQI), 746 to 770 (LPKI…LLCN), and 772 to 794 (YLNH…CPDG). N-linked (GlcNAc...) asparagine glycans are attached at residues N330 and N359. N458 and N472 each carry an N-linked (GlcNAc...) asparagine glycan. Residues N567, N570, and N601 are each glycosylated (N-linked (GlcNAc...) asparagine). N-linked (GlcNAc...) asparagine glycans are attached at residues N687, N699, and N704. N-linked (GlcNAc...) asparagine glycosylation is found at N805, N821, and N832. LRR repeat units follow at residues 822-846 (FTQL…LSDL) and 848-870 (SLNY…ICNI). A helical membrane pass occupies residues 917 to 937 (ITICAFTFVIIIVLVLLAVYL). A Protein kinase domain is found at 1002 to 1282 (FSKVHIIGDG…KGLKMTHGME (281 aa)). Residues 1008–1016 (IGDGGFGTV) and K1030 contribute to the ATP site. D1129 functions as the Proton acceptor in the catalytic mechanism.

The protein belongs to the protein kinase superfamily. Ser/Thr protein kinase family. As to quaternary structure, interacts with TDL1A. Expressed in anthers and ovules during meiosis.

Its subcellular location is the cell membrane. The enzyme catalyses L-seryl-[protein] + ATP = O-phospho-L-seryl-[protein] + ADP + H(+). The catalysed reaction is L-threonyl-[protein] + ATP = O-phospho-L-threonyl-[protein] + ADP + H(+). Its function is as follows. Receptor-like kinase that plays important roles in restricting the number of cells entering into male and female sporogenesis. Involved in cell specification during anther development and initiation of anther wall formation. The polypeptide is Leucine-rich repeat receptor protein kinase MSP1 (Oryza sativa subsp. japonica (Rice)).